The sequence spans 214 residues: 3-demethoxyubiquinol 3-hydroxylase (214 aa).

Fe cation contacts are provided by Glu-63, Glu-93, His-96, Glu-145, Glu-177, and His-180.

This sequence belongs to the COQ7 family. It depends on Fe cation as a cofactor.

The protein resides in the cell membrane. It catalyses the reaction a 5-methoxy-2-methyl-3-(all-trans-polyprenyl)benzene-1,4-diol + AH2 + O2 = a 3-demethylubiquinol + A + H2O. It participates in cofactor biosynthesis; ubiquinone biosynthesis. In terms of biological role, catalyzes the hydroxylation of 2-nonaprenyl-3-methyl-6-methoxy-1,4-benzoquinol during ubiquinone biosynthesis. The chain is 3-demethoxyubiquinol 3-hydroxylase from Psychrobacter arcticus (strain DSM 17307 / VKM B-2377 / 273-4).